The primary structure comprises 446 residues: Adenylosuccinate synthetase (446 aa).

GTP-binding positions include 21–27 (GDEGKGK) and 49–51 (GHT). Catalysis depends on D22, which acts as the Proton acceptor. The Mg(2+) site is built by D22 and G49. IMP-binding positions include 22–25 (DEGK), 47–50 (NAGH), T141, R155, Q236, T251, and R319. Residue H50 is the Proton donor of the active site. Position 315 to 321 (315 to 321 (VTTGRSR)) interacts with substrate. GTP contacts are provided by residues R321, 347 to 349 (KLD), and 429 to 431 (STS).

It belongs to the adenylosuccinate synthetase family. In terms of assembly, homodimer. Requires Mg(2+) as cofactor.

It is found in the cytoplasm. It carries out the reaction IMP + L-aspartate + GTP = N(6)-(1,2-dicarboxyethyl)-AMP + GDP + phosphate + 2 H(+). Its pathway is purine metabolism; AMP biosynthesis via de novo pathway; AMP from IMP: step 1/2. In terms of biological role, plays an important role in the de novo pathway of purine nucleotide biosynthesis. Catalyzes the first committed step in the biosynthesis of AMP from IMP. The sequence is that of Adenylosuccinate synthetase from Polaromonas naphthalenivorans (strain CJ2).